Consider the following 476-residue polypeptide: Glycogen synthase (476 aa).

Lysine 15 contributes to the ADP-alpha-D-glucose binding site.

It belongs to the glycosyltransferase 1 family. Bacterial/plant glycogen synthase subfamily.

It catalyses the reaction [(1-&gt;4)-alpha-D-glucosyl](n) + ADP-alpha-D-glucose = [(1-&gt;4)-alpha-D-glucosyl](n+1) + ADP + H(+). Its pathway is glycan biosynthesis; glycogen biosynthesis. In terms of biological role, synthesizes alpha-1,4-glucan chains using ADP-glucose. The polypeptide is Glycogen synthase (Mycoplasma mobile (strain ATCC 43663 / 163K / NCTC 11711) (Mesomycoplasma mobile)).